The sequence spans 92 residues: UPF0728 protein C10orf53 homolog (92 aa).

The protein belongs to the UPF0728 family.

The polypeptide is UPF0728 protein C10orf53 homolog (Danio rerio (Zebrafish)).